Here is a 356-residue protein sequence, read N- to C-terminus: 3-deoxy-alpha-D-manno-octulosonate 8-oxidase (356 aa).

It belongs to the iron-containing alcohol dehydrogenase family. A divalent metal cation serves as cofactor.

The enzyme catalyses 3-deoxy-alpha-D-manno-oct-2-ulosonate + O2 = 3,8-dideoxy-8-oxo-alpha-D-manno-octulosonate + H2O2. The protein operates within bacterial outer membrane biogenesis; lipopolysaccharide biosynthesis. With respect to regulation, inhibited by EDTA. Catalyzes the first step of the biosynthesis of Kdo8N (8-amino-3,8-dideoxy-D-manno-octulosonate) from Kdo (3-deoxy-D-manno-octulosonate). In Shewanella oneidensis (strain ATCC 700550 / JCM 31522 / CIP 106686 / LMG 19005 / NCIMB 14063 / MR-1), this protein is 3-deoxy-alpha-D-manno-octulosonate 8-oxidase.